We begin with the raw amino-acid sequence, 65 residues long: Beta-defensin 106A (65 aa).

Residues 1 to 20 (MRTFLFLFAVLFFLTPAKNE) form the signal peptide. Intrachain disulfides connect Cys-26-Cys-53, Cys-33-Cys-47, and Cys-37-Cys-54.

This sequence belongs to the beta-defensin family. In terms of assembly, monomer. Interacts with CCR2 (via extracellular N-terminal region); this interaction may preferentially require specific tyrosine sulfation on CCR2.

It is found in the secreted. The protein resides in the membrane. In terms of biological role, has antibacterial activity. Acts as a ligand for C-C chemokine receptor CCR2. This chain is Beta-defensin 106A (DEFB106A), found in Pongo pygmaeus (Bornean orangutan).